A 279-amino-acid chain; its full sequence is Prephenate dehydratase (279 aa).

The Prephenate dehydratase domain occupies 2-178; that stretch reads KIAYLGPRGS…NSTRFWLLGK (177 aa). The region spanning 194–272 is the ACT domain; it reads LALTLPDNLP…VNVRLLGNYS (79 aa).

The enzyme catalyses prephenate + H(+) = 3-phenylpyruvate + CO2 + H2O. It functions in the pathway amino-acid biosynthesis; L-phenylalanine biosynthesis; phenylpyruvate from prephenate: step 1/1. This is Prephenate dehydratase (pheA) from Lactococcus lactis subsp. cremoris (strain MG1363).